An 88-amino-acid polypeptide reads, in one-letter code: uncharacterized protein (88 aa).

This sequence belongs to the phD/YefM antitoxin family.

This is an uncharacterized protein from Sinorhizobium fredii (strain NBRC 101917 / NGR234).